Consider the following 245-residue polypeptide: OVARIAN TUMOR DOMAIN-containing deubiquitinating enzyme 11 (245 aa).

The segment at Met-1–Thr-37 is disordered. Low complexity predominate over residues Ala-10 to Ala-35. Positions Leu-101 to Asn-225 constitute an OTU domain. Asp-109 is an active-site residue. Cys-112 serves as the catalytic Nucleophile. The active site involves His-218.

This sequence belongs to the peptidase C85 family.

It carries out the reaction Thiol-dependent hydrolysis of ester, thioester, amide, peptide and isopeptide bonds formed by the C-terminal Gly of ubiquitin (a 76-residue protein attached to proteins as an intracellular targeting signal).. Its function is as follows. Hydrolase that can remove conjugated ubiquitin from proteins in vitro and may therefore play an important regulatory role at the level of protein turnover by preventing degradation. Inactive cysteine protease. This Arabidopsis thaliana (Mouse-ear cress) protein is OVARIAN TUMOR DOMAIN-containing deubiquitinating enzyme 11.